A 718-amino-acid polypeptide reads, in one-letter code: D-(-)-3-hydroxybutyrate oligomer hydrolase (718 aa).

Serine 320 (charge relay system) is an active-site residue.

The protein belongs to the D-(-)-3-hydroxybutyrate oligomer hydrolase family.

Its subcellular location is the cytoplasm. The enzyme catalyses (3R)-hydroxybutanoate dimer + H2O = 2 (R)-3-hydroxybutanoate + H(+). It functions in the pathway lipid metabolism; butanoate metabolism. Inhibited by diisopropylfluorophosphate (DFP). Participates in the degradation of poly-3-hydroxybutyrate (PHB). It works downstream of poly(3-hydroxybutyrate) depolymerase, hydrolyzing D(-)-3-hydroxybutyrate oligomers of various length (3HB-oligomers) into 3HB-monomers. Seems to have also poly(3-hydroxybutyrate) depolymerase activity since it is able to release 3HB-monomers from artificial amorphous PHB. In Cupriavidus necator (strain ATCC 17699 / DSM 428 / KCTC 22496 / NCIMB 10442 / H16 / Stanier 337) (Ralstonia eutropha), this protein is D-(-)-3-hydroxybutyrate oligomer hydrolase (phaZ2).